Here is a 1012-residue protein sequence, read N- to C-terminus: MSVDYANYTVLMPPTPDNQPSGGAPPAAPSAGGARPGDLPLPPYGSSSSSRLVNRRGGGDDGAKMDRRLSTARVPAPSSNKSLLVRSQTGDFDHNRWLFETKGTYGIGNAYWPQDNVYGDDGGGGAVKMEDLVEKPWKPLSRKVPIPPGILSPYRLLVLVRFVALFLFLVWRVTNPNMDALWLWGISIVCEFWFAFSWLLDQMPKLNPINRAADLAALKEKFESPSPTNPTGRSDLPGLDVFISTADPYKEPTLVTANTLLSILATEYPVEKLFVYISDDGGALLTFESMAEACAFAKVWVPFCRKHSIEPRNPDSYFTQKGDPTKGKKRPDFVKDRRWIKREYDEFKIRVNSLPDLIRRRANALNARERKLARDKQAAGDADALASVKAATWMADGTHWPGTWLDPSPDHAKGDHASIVQVMIKNPHHDVVYGEAGDHPYLDMTDVDMRIPMFAYLSREKRAGYDHNKKAGAMNAMVRASAILSNGPFMLNFDCDHYIYNCQAIREAMCYMLDRGGDRICYIQFPQRFEGIDPSDRYANHNTVFFDGNMRALDGLQGPMYVGTGCLFRRYAIYGFNPPRAIEYRGTYGQTKVPIDPRQGSEAMPGAGGGRSGGGSVGGDHELQALSTAHPDHEAPQKFGKSKMFIESIAVAEYQGRPLQDHPSVLNGRPPGALLMPRPPLDAATVAESVSVISCWYEDNTEWGQRVGWIYGSVTEDVVTGYRMHNRGWRSVYCITRRDAFRGTAPINLTDRLHQVLRWATGSVEIFFSKNNAVLASRRLKFLQRMAYLNVGIYPFTSLFLIMYCLLPALSLFSGQFIVATLDPTFLSYLLLITITLMLLCLLEVKWSGIGLEEWWRNEQFWVIGGTSAHLAAVLQGLLKVVAGIEISFTLTAKAAAEDDDDPFAELYLIKWTSLFIPPLAVIGINIIALVVGVSRTVYAEIPQYSKLLGGGFFSFWVLAHYYPFAKGLMGRRGRTPTIVYVWAGLISITVSLLWITISPPDDSVAQGGIDV.

The interval 1–81 (MSVDYANYTV…ARVPAPSSNK (81 aa)) is disordered. Low complexity predominate over residues 20–37 (PSGGAPPAAPSAGGARPG). The segment covering 57 to 69 (GGGDDGAKMDRRL) has biased composition (basic and acidic residues). 2 consecutive transmembrane segments (helical) span residues 150–170 (ILSPYRLLVLVRFVALFLFLV) and 180–200 (ALWLWGISIVCEFWFAFSWLL). The active site involves D280. Residues 597-620 (PRQGSEAMPGAGGGRSGGGSVGGD) form a disordered region. The segment covering 606–618 (GAGGGRSGGGSVG) has biased composition (gly residues). D717 is a catalytic residue. Helical transmembrane passes span 799–819 (LFLIMYCLLPALSLFSGQFIV), 825–845 (TFLSYLLLITITLMLLCLLEV), 871–891 (LAAVLQGLLKVVAGIEISFTL), 914–934 (SLFIPPLAVIGINIIALVVGV), 948–968 (LLGGGFFSFWVLAHYYPFAKG), and 978–998 (TIVYVWAGLISITVSLLWITI).

Belongs to the glycosyltransferase 2 family. Plant cellulose synthase-like D subfamily.

The protein localises to the golgi apparatus membrane. Functionally, thought to be a Golgi-localized beta-glycan synthase that polymerize the backbones of noncellulosic polysaccharides (hemicelluloses) of plant cell wall. This is Cellulose synthase-like protein D5 (CSLD5) from Oryza sativa subsp. japonica (Rice).